Reading from the N-terminus, the 348-residue chain is Enkurin domain-containing protein 1 (348 aa).

Disordered regions lie at residues 1–65, 84–195, and 262–282; these read MCEG…RPGG, GGIS…PSAK, and AEAR…TRMP. Residue Ser93 is modified to Phosphoserine. Over residues 95-127 the composition is skewed to basic and acidic residues; it reads KRKDPKDHEKENMRRIREIQRRFREQEHSREQG. Ser138 carries the phosphoserine modification. Residues 139–148 are compositionally biased toward basic and acidic residues; sequence PKYDKVESRV. The Enkurin domain occupies 253-345; sequence ERRDLWRREA…IFSRPKVFVK (93 aa).

In terms of assembly, interacts with alpha-tubulin. Interacts (via central region) with CCP110 (via N-terminal region); competes with CEP97 for binding to CCP110.

It localises to the cytoplasm. The protein localises to the cytoskeleton. The protein resides in the microtubule organizing center. Its subcellular location is the centrosome. It is found in the centriole. It localises to the cilium basal body. The protein localises to the cell projection. The protein resides in the cilium. Its subcellular location is the spindle. It is found in the spindle pole. It localises to the cilium axoneme. Functionally, microtubule-binding protein which regulates microtubule organization and stability. Promotes the stability of astral microtubules and facilitates the proper orientation of the mitotic spindle. This allows the oriented division of basal keratinocytes and contributes to epidermal stratification. Required for the assembly of both primary and motile cilia. Destabilizes the interaction between CCP110 and CEP97 by competing with CEP97 for binding to CCP110 which promotes the removal of CCP110 and CEP97 from the mother centriole and allows the initiation of ciliogenesis. The protein is Enkurin domain-containing protein 1 (ENKD1) of Bos taurus (Bovine).